Consider the following 145-residue polypeptide: Superoxide dismutase [Mn/Fe] (145 aa).

Fe(3+) contacts are provided by histidine 10 and histidine 64. Mn(2+)-binding residues include histidine 10 and histidine 64. Residues 126-145 (TSTANQDTPISEGKKPILGL) form a disordered region.

It belongs to the iron/manganese superoxide dismutase family. Requires Mn(2+) as cofactor. It depends on Fe(3+) as a cofactor.

The catalysed reaction is 2 superoxide + 2 H(+) = H2O2 + O2. In terms of biological role, destroys superoxide anion radicals which are normally produced within the cells and which are toxic to biological systems. Catalyzes the dismutation of superoxide anion radicals into O2 and H2O2 by successive reduction and oxidation of the transition metal ion at the active site. The sequence is that of Superoxide dismutase [Mn/Fe] (sodA) from Streptococcus oralis.